The sequence spans 145 residues: Transcriptional regulator MraZ (145 aa).

2 consecutive SpoVT-AbrB domains span residues 5-49 and 78-121; these read TYNH…LESE and TYKI…AKEV.

This sequence belongs to the MraZ family. As to quaternary structure, forms oligomers.

It localises to the cytoplasm. It is found in the nucleoid. This chain is Transcriptional regulator MraZ, found in Ureaplasma parvum serovar 3 (strain ATCC 27815 / 27 / NCTC 11736).